Here is a 250-residue protein sequence, read N- to C-terminus: Acetylglutamate kinase (250 aa).

Substrate is bound by residues 41 to 42 (GG), R63, and N156.

Belongs to the acetylglutamate kinase family. ArgB subfamily.

Its subcellular location is the cytoplasm. It catalyses the reaction N-acetyl-L-glutamate + ATP = N-acetyl-L-glutamyl 5-phosphate + ADP. It participates in amino-acid biosynthesis; L-arginine biosynthesis; N(2)-acetyl-L-ornithine from L-glutamate: step 2/4. In terms of biological role, catalyzes the ATP-dependent phosphorylation of N-acetyl-L-glutamate. This chain is Acetylglutamate kinase, found in Listeria monocytogenes serovar 1/2a (strain ATCC BAA-679 / EGD-e).